A 116-amino-acid chain; its full sequence is uncharacterized protein (116 aa).

The interval Arg64–Arg116 is disordered. The span at Arg73 to Ser87 shows a compositional bias: low complexity. The span at Arg90 to Lys105 shows a compositional bias: basic and acidic residues.

This is an uncharacterized protein from Saccharomyces cerevisiae (strain ATCC 204508 / S288c) (Baker's yeast).